The primary structure comprises 710 residues: Interleukin-1 receptor-associated kinase 1 (710 aa).

One can recognise a Death domain in the interval 27-106; it reads MCRFYKVMDA…DIITAWHPPA (80 aa). Phosphothreonine; by PKC/PRKCI is present on Thr66. Residues 107-133 form a disordered region; the sequence is PVVPPSTAAPRPSSISAGSEAGDWSPR. The tract at residues 110-211 is proST region; the sequence is PPSTAAPRPS…FCEISQGTCN (102 aa). Over residues 111–123 the composition is skewed to low complexity; the sequence is PSTAAPRPSSISA. Ser131 carries the phosphoserine modification. Glycyl lysine isopeptide (Lys-Gly) (interchain with G-Cter in ubiquitin) cross-links involve residues Lys134 and Lys180. The tract at residues 169–190 is disordered; sequence PPLPSSAPSSTKSSPESPVSGL. Over residues 174–188 the composition is skewed to low complexity; the sequence is SAPSSTKSSPESPVS. A Phosphothreonine; by IRAK4 modification is found at Thr209. The Protein kinase domain maps to 212 to 521; it reads FSEELRIGEG…TQVYKRLEGL (310 aa). Residues 218–226 and Lys239 each bind ATP; that span reads IGEGGFGCV. Catalysis depends on Asp340, which acts as the Proton acceptor. ATP-binding positions include 342–345 and Asp358; that span reads KSSN. Ser375 is modified (phosphoserine). The residue at position 387 (Thr387) is a Phosphothreonine. Disordered regions lie at residues 527–655 and 689–710; these read WELE…SEPP and FPGLDLEPEKSQGPEESDEFQS. A compositionally biased stretch (polar residues) spans 537–553; sequence PSPQENSYMSTTGSAQS. The residue at position 553 (Ser553) is a Phosphoserine. Over residues 567–576 the composition is skewed to low complexity; that stretch reads APAQAAQQLQ. The segment covering 616 to 639 has biased composition (polar residues); sequence SCTQGGTTRESSVRSSPGFQPTTM. Positions 640–654 are enriched in low complexity; that stretch reads EGSPTGSSSLLSSEP.

This sequence belongs to the protein kinase superfamily. TKL Ser/Thr protein kinase family. Pelle subfamily. As to quaternary structure, homodimer. Forms a complex with TRAF6, PELI1, IRAK4 and MYD88. Direct binding of SMAD6 to PELI1 prevents complex formation and hence negatively regulates IL1R-TLR signaling and eventually NF-kappa-B-mediated gene expression. The TRAF6-PELI1-IRAK4-MYD88 complex recruits MAP3K7/TAK1, TAB1 and TAB2 to mediate NF-kappa-B activation. Interaction with MYD88 recruits IRAK1 to the stimulated receptor complex. Interacts with TOLLIP; this interaction occurs in the cytosol prior to receptor activation. Interacts with IL1RL1. Interacts (when polyubiquitinated) with IKBKG/NEMO. Interacts with RSAD2/viperin. Interacts with IRAK1BP1. Interacts with PELI2. Interacts with ZC3H12A; this interaction increases the interaction between ZC3H12A and IKBKB/IKKB. Interacts with IRAK4. Interacts with PELI3. Interacts with PELI1 and TRAF6. Interacts with INAVA; the interaction takes place upon PRR stimulation. Interacts (via C-terminus) with NFATC4 (via N-terminus). Mg(2+) is required as a cofactor. Following recruitment on the activated receptor complex, phosphorylated on Thr-209, probably by IRAK4, resulting in a conformational change of the kinase domain, allowing further phosphorylations to take place. Thr-387 phosphorylation in the activation loop is required to achieve full enzymatic activity. In terms of processing, polyubiquitinated by TRAF6 after cell stimulation with IL-1-beta by PELI1, PELI2 and PELI3. Polyubiquitination occurs with polyubiquitin chains linked through 'Lys-63'. Ubiquitination promotes interaction with NEMO/IKBKG. Also sumoylated; leading to nuclear translocation. As to expression, highly expressed in liver, followed by kidney and skeletal muscle.

It localises to the cytoplasm. It is found in the nucleus. Its subcellular location is the lipid droplet. The enzyme catalyses L-seryl-[protein] + ATP = O-phospho-L-seryl-[protein] + ADP + H(+). It catalyses the reaction L-threonyl-[protein] + ATP = O-phospho-L-threonyl-[protein] + ADP + H(+). In terms of biological role, serine/threonine-protein kinase that plays a critical role in initiating innate immune response against foreign pathogens. Involved in Toll-like receptor (TLR) and IL-1R signaling pathways. Is rapidly recruited by MYD88 to the receptor-signaling complex upon TLR activation. Association with MYD88 leads to IRAK1 phosphorylation by IRAK4 and subsequent autophosphorylation and kinase activation. Phosphorylates E3 ubiquitin ligases Pellino proteins (PELI1, PELI2 and PELI3) to promote pellino-mediated polyubiquitination of IRAK1. Then, the ubiquitin-binding domain of IKBKG/NEMO binds to polyubiquitinated IRAK1 bringing together the IRAK1-MAP3K7/TAK1-TRAF6 complex and the NEMO-IKKA-IKKB complex. In turn, MAP3K7/TAK1 activates IKKs (CHUK/IKKA and IKBKB/IKKB) leading to NF-kappa-B nuclear translocation and activation. Alternatively, phosphorylates TIRAP to promote its ubiquitination and subsequent degradation. Phosphorylates the interferon regulatory factor 7 (IRF7) to induce its activation and translocation to the nucleus, resulting in transcriptional activation of type I IFN genes, which drive the cell in an antiviral state. When sumoylated, translocates to the nucleus and phosphorylates STAT3. This Mus musculus (Mouse) protein is Interleukin-1 receptor-associated kinase 1 (Irak1).